The sequence spans 456 residues: Iroquois-class homeodomain protein irx-2 (456 aa).

Positions 110–172 form a DNA-binding region, homeobox; TALE-type; that stretch reads DPAYRKNATR…NARRRLKKEN (63 aa). Disordered regions lie at residues 172 to 214, 246 to 320, and 434 to 456; these read NKMT…AEDE, CESG…PASK, and RPTN…QPYP. Composition is skewed to basic and acidic residues over residues 192-205 and 246-256; these read GERV…KAQD and CESGSESKEKY. Positions 257 to 269 are enriched in acidic residues; the sequence is DDDEDEEEGDEED. Polar residues predominate over residues 291-318; the sequence is NHQQDGSPRNSNKTSLDNGMSPSSQTPA.

This sequence belongs to the TALE/IRO homeobox family. Expressed in the neural plate in overlapping patterns with other irx members, which all share an anterior border of expression. Also expressed in the placodes. Broadly expressed in the tailbud rhombencephalon (hindbrain). Outside the nervous system and at tailbud stages, expressed in the developing otic vesicle, branchial arches, prospective heart region and pronephros.

It is found in the nucleus. Functionally, acts partially redundantly with other irx members in neural patterning. Required for formation of the posterior forebrain, midbrain, hindbrain, and to a lesser extent, spinal cord. Acts early in neural plate development to induce expression of some but not all proneural genes, and specify a neural precursor state. Also up-regulates repressors that prevent neuronal differentiation. Patterns the neuroectoderm in both the anterior/posterior and dorsal/ventral axes. Probably dispensable for pronephric kidney development. The chain is Iroquois-class homeodomain protein irx-2 from Xenopus tropicalis (Western clawed frog).